A 544-amino-acid polypeptide reads, in one-letter code: MALSEVLSMVAQLGYYEKVTGILGVVSIILLFWKLNHEPFYPALPLAGEPPQRRWFSLSNRLRYYNDCAALFDEAYHTAYAKKGKAVLVPSMGVHTAMIMPESAMNWAMSQPDDSLSIKKAFSELNQTKYSLGHSRYWEDPWQLDLVKAHLSSILQNLIPQLNEELAAAFSKHLGTDAENWKEIELEVIMRRVIAQATSRFIVGLPLCRDDGYLDLSYKVILGMVTTIWATLPFPDLIRAVTGPLASWQTRRNISRIQEHLEPLYQERISILESRDGQKSDPGPQDLFMMMLRFAQKKRPDEYANLGIMTRRVCAANFVAMHQSTVSVTNLILNIIGSDAEFNTIATLRDEITQVMRGTDAKGCWTKDTFTRMRKCDSVAREAMRLNFPLGTRGSMRTVLKDGLESPEGIKLQKGTTISWLASCAQVDADRFDNPQKFDPFRFSRASKDDDDDDDDDGRSTSSHTKDAFVTTSPQYLPFGHGKHACPGRFMVDLMFKIILAQLLTHYDLGWPEDYQGKQPPSVWQGELSEPPPGARILVKRRKV.

The helical transmembrane segment at 13-33 (LGYYEKVTGILGVVSIILLFW) threads the bilayer. Positions 438–448 (FDPFRFSRASK) are enriched in basic and acidic residues. Positions 438–467 (FDPFRFSRASKDDDDDDDDDGRSTSSHTKD) are disordered. C486 contacts heme.

The protein belongs to the cytochrome P450 family. The cofactor is heme.

It is found in the membrane. The protein operates within secondary metabolite biosynthesis. Functionally, cytochrome P450 monooxygenase; part of the gene cluster that mediates the biosynthesis of tenellin-type 2-pyridones, iron-chelating compounds involved in iron stress tolerance, competition with the natural competitor fungus Metarhizium robertsii and insect hosts infection. TenB catalyzes the selective N-hydroxylation of the 2-pyridone nitrogen of yield tellinin and 15-hydroxytellenin (15-HT), respectively. The pathway begins with the assembly of the polyketide-amino acid backbone by the hybrid PKS-NRPS tenS with the help of the enoyl reductase tenC. These enzymes catalyze the synthesis of the pyrrolidine-2-dione intermediates pretellinin A, 11-hydropretellenin A, 12-hydropretellenin A, 13-hydropretellenin A, 14-hydropretellenin A, 12-oxopretellenin A and prototellinin D. The cytochrome P450 monooxygenase tenA then catalyzes an oxidative ring expansion of pretenellin A and 14-hydropretellenin A to form the 2-pyridone core, leading to pretenellin B and pyridovericin, respectively. The cytochrome P450 monooxygenase tenB is then required for the selective N-hydroxylation of the 2-pyridone nitrogen of yield tellinin and 15-hydroxytellenin (15-HT), respectively. The UDP-glucosyltransferase GT1 and the methyltransferase MT1, located outside the tenS gene cluster, contribute to the stepwise glycosylation and methylation of 15-HT to obtain the glycoside pyridovericin-N-O-(4-O-methyl-beta-D-glucopyranoside) (PMGP). Additional related compounds such as 1-O-methyl-15-HT, (8Z)-1-O-methyl-15-HT, and O-methyltenellin A are also produced but the enzymes involved in their biosynthesis have still to be determined. The chain is Cytochrome P450 monooxygenase tenB from Beauveria bassiana (strain ARSEF 2860) (White muscardine disease fungus).